We begin with the raw amino-acid sequence, 515 residues long: Signal transduction histidine-protein kinase/phosphatase MprB (515 aa).

Topologically, residues 1-24 are cytoplasmic; the sequence is MTLPPQPSRLKPPRNTSSLSLRWR. The helical transmembrane segment at 25–45 threads the bilayer; sequence VMLLAMSMVAMVVVLMSVAVY. The Extracellular segment spans residues 46–165; that stretch reads AVVSRALYDD…TGQVLGRLGT (120 aa). A helical membrane pass occupies residues 166–186; the sequence is VLLIVGGVGVAVAAIAGGMVA. The region spanning 187-239 is the HAMP domain; that stretch reads RAGLRPVGRLTQAAERVARTDDLRPIPVFGSDELARLTEAFNMMLRALTESRE. Over 187–515 the chain is Cytoplasmic; sequence RAGLRPVGRL…GKSRSASKEL (329 aa). Residues 247–467 enclose the Histidine kinase domain; that stretch reads DAGHELRTPL…SFYVMLPGRP (221 aa). His-250 carries the post-translational modification Phosphohistidine; by autocatalysis. The tract at residues 468–515 is disordered; sequence LTPGGNGTAPVPAAQFDPDMRSAGSRADRRVIKNTETNGKSRSASKEL.

Mg(2+) serves as cofactor. Mn(2+) is required as a cofactor. Post-translationally, autophosphorylated.

The protein localises to the cell membrane. It carries out the reaction ATP + protein L-histidine = ADP + protein N-phospho-L-histidine.. Member of the two-component regulatory system MprB/MprA which contributes to maintaining a balance among several systems involved in stress resistance and is required for establishment and maintenance of persistent infection in the host. In response to environmental signals MprB acts both as a membrane-associated protein kinase that undergoes autophosphorylation and subsequently transfers the phosphate to MprA, and a protein phosphatase that dephosphorylates phospho-MprA. This is Signal transduction histidine-protein kinase/phosphatase MprB (mprB) from Mycobacterium sp. (strain JLS).